A 211-amino-acid polypeptide reads, in one-letter code: uncharacterized protein (211 aa).

Helical transmembrane passes span 77–97 (FLMFHLFCNSALFAVGIAITI), 113–133 (GISVSVWLILAAYMIYWVLIG), 152–172 (ILISMVPNVIFMLVFLFNVIP), and 179–199 (LLTPWFVGTCAFATLLFPLFG).

The protein resides in the cell membrane. This is an uncharacterized protein from Bacillus subtilis (strain 168).